The primary structure comprises 270 residues: Undecaprenyl-diphosphatase (270 aa).

8 helical membrane-spanning segments follow: residues 1–21 (MDLF…FLPI), 39–59 (QGLV…MLYF), 87–107 (SHLV…GLAC), 114–134 (VARD…LLWW), 147–167 (ALSW…LIPG), 193–213 (FLMA…DLFA), 223–243 (FLGV…HGLL), and 250–270 (TMTP…ATLG).

The protein belongs to the UppP family.

The protein localises to the cell inner membrane. It catalyses the reaction di-trans,octa-cis-undecaprenyl diphosphate + H2O = di-trans,octa-cis-undecaprenyl phosphate + phosphate + H(+). Functionally, catalyzes the dephosphorylation of undecaprenyl diphosphate (UPP). Confers resistance to bacitracin. The polypeptide is Undecaprenyl-diphosphatase (Magnetococcus marinus (strain ATCC BAA-1437 / JCM 17883 / MC-1)).